Consider the following 382-residue polypeptide: Lipid-A-disaccharide synthase (382 aa).

It belongs to the LpxB family.

It catalyses the reaction a lipid X + a UDP-2-N,3-O-bis[(3R)-3-hydroxyacyl]-alpha-D-glucosamine = a lipid A disaccharide + UDP + H(+). The protein operates within bacterial outer membrane biogenesis; LPS lipid A biosynthesis. Its function is as follows. Condensation of UDP-2,3-diacylglucosamine and 2,3-diacylglucosamine-1-phosphate to form lipid A disaccharide, a precursor of lipid A, a phosphorylated glycolipid that anchors the lipopolysaccharide to the outer membrane of the cell. This chain is Lipid-A-disaccharide synthase, found in Alteromonas mediterranea (strain DSM 17117 / CIP 110805 / LMG 28347 / Deep ecotype).